Reading from the N-terminus, the 64-residue chain is UPF0434 protein Bmul_0750/BMULJ_02510 (64 aa).

It belongs to the UPF0434 family.

This is UPF0434 protein Bmul_0750/BMULJ_02510 from Burkholderia multivorans (strain ATCC 17616 / 249).